Reading from the N-terminus, the 466-residue chain is Methylenetetrahydrofolate--tRNA-(uracil-5-)-methyltransferase TrmFO (466 aa).

Residue 16-21 coordinates FAD; that stretch reads GGGMAG.

It belongs to the MnmG family. TrmFO subfamily. Requires FAD as cofactor.

The protein localises to the cytoplasm. The enzyme catalyses uridine(54) in tRNA + (6R)-5,10-methylene-5,6,7,8-tetrahydrofolate + NADH + H(+) = 5-methyluridine(54) in tRNA + (6S)-5,6,7,8-tetrahydrofolate + NAD(+). The catalysed reaction is uridine(54) in tRNA + (6R)-5,10-methylene-5,6,7,8-tetrahydrofolate + NADPH + H(+) = 5-methyluridine(54) in tRNA + (6S)-5,6,7,8-tetrahydrofolate + NADP(+). Functionally, catalyzes the folate-dependent formation of 5-methyl-uridine at position 54 (M-5-U54) in all tRNAs. The polypeptide is Methylenetetrahydrofolate--tRNA-(uracil-5-)-methyltransferase TrmFO (Maricaulis maris (strain MCS10) (Caulobacter maris)).